Here is a 712-residue protein sequence, read N- to C-terminus: Protein phosphatase 1 regulatory subunit 37 (712 aa).

Residues 1–12 (MEIPPQEAPPGP) are compositionally biased toward pro residues. The segment at 1–47 (MEIPPQEAPPGPGADADADAEAETEEASAEAESPTGTSPPADGRLKA) is disordered. Over residues 16-29 (ADADAEAETEEASA) the composition is skewed to acidic residues. Phosphoserine occurs at positions 56 and 62. LRR repeat units lie at residues 226–246 (SLAVLHLENASLSGRPLMLLA), 254–275 (NLRELYLADNKLNGLQDSAQLG), 283–303 (SLQILDLRNNHVLDSGLAYIC), 312–332 (GLVTLVLWNNQLTHTGMAFLG), and 340–360 (SLETLNLGHNPIGNEGVRNLK). Residues 492 to 680 (ESGELPAVGS…PPGLEAKGGS (189 aa)) are disordered. Residues 514 to 531 (SDSDSDSDREEQEEEEED) are compositionally biased toward acidic residues. S583 is modified (phosphoserine). The segment covering 605-626 (PPVPPTFVSSPPPSPPSPPASP) has biased composition (pro residues). Residues 639–651 (SEAQPQLEPSQAG) are compositionally biased toward polar residues.

This sequence belongs to the PPP1R37 family. As to quaternary structure, interacts with PPP1CA.

In terms of biological role, inhibits phosphatase activity of protein phosphatase 1 (PP1) complexes. This is Protein phosphatase 1 regulatory subunit 37 (Ppp1r37) from Mus musculus (Mouse).